The following is a 131-amino-acid chain: Histone H2A.1 (131 aa).

S2 bears the N-acetylserine mark. K5 and K8 each carry N6-acetyllysine. Q106 carries the N5-methylglutamine modification. S128 carries the post-translational modification Phosphoserine. Residues 128-129 carry the [ST]-Q motif motif; the sequence is SQ.

Belongs to the histone H2A family. The nucleosome is a histone octamer containing two molecules each of H2A, H2B, H3 and H4 assembled in one H3-H4 heterotetramer and two H2A-H2B heterodimers. The octamer wraps approximately 147 bp of DNA. Post-translationally, phosphorylated to form H2AS128ph (gamma-H2A) in response to DNA double-strand breaks (DSBs) generated by exogenous genotoxic agents and by stalled replication forks. Phosphorylation is dependent on the DNA damage checkpoint kinases MEC1/ATR and TEL1/ATM, spreads on either side of a detected DSB site and may mark the surrounding chromatin for recruitment of proteins required for DNA damage signaling and repair. Gamma-H2A is removed from the DNA prior to the strand invasion-primer extension step of the repair process and subsequently dephosphorylated by PPH3, a component of the histone H2A phosphatase complex (HTP-C). Dephosphorylation is necessary for efficient recovery from the DNA damage checkpoint. In terms of processing, acetylated by ESA1 to form H2AK4ac and H2AK7ac.

Its subcellular location is the nucleus. It is found in the chromosome. Functionally, core component of nucleosome which plays a central role in DNA double strand break (DSB) repair. Nucleosomes wrap and compact DNA into chromatin, limiting DNA accessibility to the cellular machineries which require DNA as a template. Histones thereby play a central role in transcription regulation, DNA repair, DNA replication and chromosomal stability. DNA accessibility is regulated via a complex set of post-translational modifications of histones, also called histone code, and nucleosome remodeling. This Candida glabrata (strain ATCC 2001 / BCRC 20586 / JCM 3761 / NBRC 0622 / NRRL Y-65 / CBS 138) (Yeast) protein is Histone H2A.1 (HTA1).